Reading from the N-terminus, the 572-residue chain is Phosphoenolpyruvate-protein phosphotransferase (572 aa).

Histidine 191 (tele-phosphohistidine intermediate) is an active-site residue. 2 residues coordinate phosphoenolpyruvate: arginine 298 and arginine 334. Mg(2+) contacts are provided by glutamate 433 and aspartate 457. Phosphoenolpyruvate is bound by residues 456–457 (ND) and arginine 467. Cysteine 504 acts as the Proton donor in catalysis.

Belongs to the PEP-utilizing enzyme family. As to quaternary structure, homodimer. Mg(2+) serves as cofactor.

The protein localises to the cytoplasm. It carries out the reaction L-histidyl-[protein] + phosphoenolpyruvate = N(pros)-phospho-L-histidyl-[protein] + pyruvate. In terms of biological role, general (non sugar-specific) component of the phosphoenolpyruvate-dependent sugar phosphotransferase system (sugar PTS). This major carbohydrate active-transport system catalyzes the phosphorylation of incoming sugar substrates concomitantly with their translocation across the cell membrane. Enzyme I transfers the phosphoryl group from phosphoenolpyruvate (PEP) to the phosphoryl carrier protein (HPr). The sequence is that of Phosphoenolpyruvate-protein phosphotransferase from Staphylococcus aureus (strain MSSA476).